Consider the following 285-residue polypeptide: 33 kDa chaperonin (285 aa).

2 disulfides stabilise this stretch: C228–C230 and C261–C264.

It belongs to the HSP33 family. Under oxidizing conditions two disulfide bonds are formed involving the reactive cysteines. Under reducing conditions zinc is bound to the reactive cysteines and the protein is inactive.

Its subcellular location is the cytoplasm. Redox regulated molecular chaperone. Protects both thermally unfolding and oxidatively damaged proteins from irreversible aggregation. Plays an important role in the bacterial defense system toward oxidative stress. The chain is 33 kDa chaperonin from Hahella chejuensis (strain KCTC 2396).